A 317-amino-acid polypeptide reads, in one-letter code: MTKVYIAGAIPEVGLNLLKEHFEVDMYDGEGLIDKETLKKGVEHADALISLLSTSVDKDIIDSANNLKIIANYGAGFNNIDVEYARQQNIDVTNTPHASTNATADLTIGLILSVARRIVEGDHLSRTTGFDGWAPLFFRGREVSGKTIGIIGLGEIGGAVAKRARAFDMDVLYTGPHRKEEKERDIGAKYVDLDTLLKNADFITINAAYNPSLHHMIDTEQFNKMKSTAYLINAGRGPIVNEQSLVEALDNKAIEGAALDVYEFEPEITDALKSFKNVVLTPHIGNATFEARDMMAKIVANDTIKKLNGDEPQFIVN.

Residues 155-156 (EI), 234-236 (AGR), and Asp-260 contribute to the NAD(+) site. The active site involves Arg-236. Residue Glu-265 is part of the active site. The active-site Proton donor is the His-283. Position 283-286 (283-286 (HIGN)) interacts with NAD(+).

This sequence belongs to the D-isomer specific 2-hydroxyacid dehydrogenase family.

In Staphylococcus epidermidis (strain ATCC 35984 / DSM 28319 / BCRC 17069 / CCUG 31568 / BM 3577 / RP62A), this protein is Putative 2-hydroxyacid dehydrogenase SERP1888.